A 207-amino-acid chain; its full sequence is Large ribosomal subunit protein uL4 (207 aa).

Positions His-49–Ile-78 are disordered.

Belongs to the universal ribosomal protein uL4 family. In terms of assembly, part of the 50S ribosomal subunit.

Its function is as follows. One of the primary rRNA binding proteins, this protein initially binds near the 5'-end of the 23S rRNA. It is important during the early stages of 50S assembly. It makes multiple contacts with different domains of the 23S rRNA in the assembled 50S subunit and ribosome. Forms part of the polypeptide exit tunnel. In Streptococcus gordonii (strain Challis / ATCC 35105 / BCRC 15272 / CH1 / DL1 / V288), this protein is Large ribosomal subunit protein uL4.